Reading from the N-terminus, the 831-residue chain is Probable beta-glucosidase H (831 aa).

N13 carries an N-linked (GlcNAc...) asparagine glycan. D225 is a catalytic residue. The PA14 domain maps to R389–V549. N474, N514, N604, N629, N726, and N823 each carry an N-linked (GlcNAc...) asparagine glycan.

The protein belongs to the glycosyl hydrolase 3 family.

It localises to the secreted. It carries out the reaction Hydrolysis of terminal, non-reducing beta-D-glucosyl residues with release of beta-D-glucose.. It participates in glycan metabolism; cellulose degradation. Functionally, beta-glucosidases are one of a number of cellulolytic enzymes involved in the degradation of cellulosic biomass. Catalyzes the last step releasing glucose from the inhibitory cellobiose. This Emericella nidulans (strain FGSC A4 / ATCC 38163 / CBS 112.46 / NRRL 194 / M139) (Aspergillus nidulans) protein is Probable beta-glucosidase H (bglH).